Here is a 306-residue protein sequence, read N- to C-terminus: Ribosomal protein L11 methyltransferase (306 aa).

S-adenosyl-L-methionine-binding residues include Thr-139, Gly-173, Asp-195, and Asn-242.

It belongs to the methyltransferase superfamily. PrmA family.

Its subcellular location is the cytoplasm. It catalyses the reaction L-lysyl-[protein] + 3 S-adenosyl-L-methionine = N(6),N(6),N(6)-trimethyl-L-lysyl-[protein] + 3 S-adenosyl-L-homocysteine + 3 H(+). Its function is as follows. Methylates ribosomal protein L11. The sequence is that of Ribosomal protein L11 methyltransferase from Trichormus variabilis (strain ATCC 29413 / PCC 7937) (Anabaena variabilis).